The primary structure comprises 381 residues: F-box/LRR-repeat protein At4g14103 (381 aa).

Positions 7 to 60 (RDVISSLPDDISSHILSFLPTKEAASTSVLSKKWRYLFAFVPNLDLDDSVYLNP) constitute an F-box domain. LRR repeat units lie at residues 118–146 (DLHL…KLRF), 171–196 (HFEE…VLDD), 218–243 (SWQE…KFTD), 249–274 (YPKV…LINY), 299–330 (TLYL…TIES), and 331–356 (NPRV…IFQG).

The protein is F-box/LRR-repeat protein At4g14103 of Arabidopsis thaliana (Mouse-ear cress).